We begin with the raw amino-acid sequence, 505 residues long: Structural protein 27 (505 aa).

3 hydrophobic regions span residues 20 to 40, 423 to 443, and 470 to 490; these read VSLICFLLVFSVTVPFVFSPV, MKGIGSDIQWLLFTVIIMSTI, and IGLGLLLSMVFFGIFIGLILV.

The protein resides in the virion. This is Structural protein 27 from His1 virus (isolate Australia/Victoria) (His1V).